Here is a 271-residue protein sequence, read N- to C-terminus: Hachiman protein HamA (271 aa).

Functionally, component of antiviral defense system Hachiman, composed of HamA and HamB. Expression of Hachiman in B.subtilis (strain BEST7003) confers resistance to phages phi105, phi29, phi3T, rho14, SBSphiJ, SpBeta and SPR. The protein is Hachiman protein HamA of Bacillus cereus.